The following is a 31-amino-acid chain: Aspartate racemase (31 aa).

Residues 1-31 (PVAPEYLFKKEEDKGANKEEEEVAPELGIRA) form a disordered region. Residues 7–18 (LFKKEEDKGANK) are compositionally biased toward basic and acidic residues.

It belongs to the aspartate/glutamate racemases family. The cofactor is pyridoxal 5'-phosphate.

It catalyses the reaction L-aspartate = D-aspartate. With respect to regulation, inhibited by hydroxylamine, aminooxyacetate, phenylhydrazine and sodium borohydride. Highly specific toward aspartate and entirely inactive on glutamate, alanine and serine. This is Aspartate racemase from Anadara broughtonii (Blood clam).